The primary structure comprises 516 residues: D-aminopeptidase (516 aa).

The Nucleophile role is filled by Ser-61. The Proton donor/acceptor role is filled by Lys-64. The important for specificity stretch occupies residues 476 to 486 (RRSMDAPAPGD). Asp-480 provides a ligand contact to substrate.

Belongs to the peptidase S12 family. Homodimer.

It catalyses the reaction Release of an N-terminal D-amino acid from a peptide, Xaa-|-Yaa-, in which Xaa is preferably D-Ala, D-Ser or D-Thr. D-amino acid amides and methyl esters also are hydrolyzed, as is glycine amide.. Its activity is regulated as follows. Inhibited by beta-lactam compounds such as 6-aminopenicillic acid, 7-aminocephalosporanic acid, benzylpenicillin and ampicillin. Inhibited by p-chloromercuribenzoate. Hydrolyzes N-terminal residues in D-amino acid-containing peptides. The sequence is that of D-aminopeptidase from Cereibacter sphaeroides (strain KD131 / KCTC 12085) (Rhodobacter sphaeroides).